We begin with the raw amino-acid sequence, 391 residues long: MTDQRGAICGAATLVVKVGSSSLTLPGGGIDVRRVDDLVDALSEVIAVGRRVVLVSSGAIATGFPAMGITHRPRTLAGKQAAASVGQGILLAHYASRFASHGLRVGQVLLTVNDLVRPTSYRNAWSTLDTLLGLGVVPIVNENDTVATGEIRFGDNDRLAALVAELVRAQALILLSDVDALYTAHPDSPDARRVEVVEDIDTLDVDTHKAGSGVGTGGMTTKLEAARMATCAGVPVVLAAAVDAPDVLAGVPVGTYFRPLATRRPRRLLWLADAATPQGQIVIDDGAVEALTQRHSSLLAVGVTRVHGDFQAGDPVTILASDGRVVGRGIAQFSHDEVRVMRGRSSAWLAAEMGPAASREIIHRDAMVLSRRRKAEPSSRNQKSSGSRVTS.

Lys-17 is an ATP binding site. The substrate site is built by Ser-57, Asp-144, and Asn-156. Residues Ser-176–Asp-177 and Thr-216–Lys-222 contribute to the ATP site. A PUA domain is found at Gln-278–Ala-356. Residues Ser-370–Ser-391 are disordered. The span at Ser-378–Ser-391 shows a compositional bias: polar residues.

This sequence belongs to the glutamate 5-kinase family.

It is found in the cytoplasm. It carries out the reaction L-glutamate + ATP = L-glutamyl 5-phosphate + ADP. The protein operates within amino-acid biosynthesis; L-proline biosynthesis; L-glutamate 5-semialdehyde from L-glutamate: step 1/2. In terms of biological role, catalyzes the transfer of a phosphate group to glutamate to form L-glutamate 5-phosphate. The polypeptide is Glutamate 5-kinase (Cutibacterium acnes (strain DSM 16379 / KPA171202) (Propionibacterium acnes)).